We begin with the raw amino-acid sequence, 63 residues long: Beta-glucosidase A-3 (63 aa).

The active site involves Asp-12. Asn-48 and Asn-56 each carry an N-linked (GlcNAc...) asparagine glycan.

This sequence belongs to the glycosyl hydrolase 3 family.

The enzyme catalyses Hydrolysis of terminal, non-reducing beta-D-glucosyl residues with release of beta-D-glucose.. It participates in glycan metabolism; cellulose degradation. In Aspergillus wentii, this protein is Beta-glucosidase A-3.